Here is a 316-residue protein sequence, read N- to C-terminus: Phosphatidylglycerol--prolipoprotein diacylglyceryl transferase (316 aa).

3 consecutive transmembrane segments (helical) span residues 18 to 38 (PIPIRAYAMCIIAGIIVAIWL), 47 to 67 (GGNPEIVLDAAIVAVPAGIIG), and 95 to 115 (NGGLGIWGAVILGGLAVAVFF). Arg141 is an a 1,2-diacyl-sn-glycero-3-phospho-(1'-sn-glycerol) binding site. 2 helical membrane-spanning segments follow: residues 188-208 (VHPTFLYELLWNLLIFALLMW) and 251-271 (INTIVSAVVFAGAIIVFFLLK). The disordered stretch occupies residues 292–316 (AVASPDGKPLPKAGEGIDGETPSTR).

It belongs to the Lgt family.

Its subcellular location is the cell membrane. The enzyme catalyses L-cysteinyl-[prolipoprotein] + a 1,2-diacyl-sn-glycero-3-phospho-(1'-sn-glycerol) = an S-1,2-diacyl-sn-glyceryl-L-cysteinyl-[prolipoprotein] + sn-glycerol 1-phosphate + H(+). Its pathway is protein modification; lipoprotein biosynthesis (diacylglyceryl transfer). Functionally, catalyzes the transfer of the diacylglyceryl group from phosphatidylglycerol to the sulfhydryl group of the N-terminal cysteine of a prolipoprotein, the first step in the formation of mature lipoproteins. In Corynebacterium glutamicum (strain ATCC 13032 / DSM 20300 / JCM 1318 / BCRC 11384 / CCUG 27702 / LMG 3730 / NBRC 12168 / NCIMB 10025 / NRRL B-2784 / 534), this protein is Phosphatidylglycerol--prolipoprotein diacylglyceryl transferase.